The sequence spans 114 residues: MAVNLYDYANQLEQALRESEEYKAIKEAFANVKANEESKKLFDEFRETQINFQQKQMQGEEIAEEDLQKAQEQAQAIEKDENISALMNAEQKMSQVFQEINQIIVKPLDEIYAD.

This sequence belongs to the UPF0342 family.

In Staphylococcus aureus (strain Newman), this protein is UPF0342 protein NWMN_1737.